Reading from the N-terminus, the 137-residue chain is uncharacterized protein (137 aa).

It belongs to the DCC thiol-disulfide oxidoreductase family.

This is an uncharacterized protein from Bacillus subtilis (strain 168).